The following is a 107-amino-acid chain: Transcription initiation factor IIA subunit 2-2 (107 aa).

Belongs to the TFIIA subunit 2 family. In terms of assembly, TFIIA is a heterodimer of the large unprocessed subunit 1 and a small subunit gamma. It was originally believed to be a heterotrimer of an alpha (p30), a beta (p20) and a gamma (p14) subunit.

Its subcellular location is the nucleus. Functionally, TFIIA is a component of the transcription machinery of RNA polymerase II and plays an important role in transcriptional activation. TFIIA in a complex with TBP mediates transcriptional activity. This is Transcription initiation factor IIA subunit 2-2 (TfIIA-S-2) from Drosophila melanogaster (Fruit fly).